The sequence spans 462 residues: tRNA-2-methylthio-N(6)-dimethylallyladenosine synthase (462 aa).

The 121-residue stretch at 18 to 138 (RKVFVKTYGC…LPNALARVRS (121 aa)) folds into the MTTase N-terminal domain. [4Fe-4S] cluster contacts are provided by Cys-27, Cys-63, Cys-101, Cys-179, Cys-183, and Cys-186. The region spanning 165 to 397 (RKRGVSAFLT…QALLSEQQYA (233 aa)) is the Radical SAM core domain. Residues 400-462 (DSMIGREMDV…TNSLIAQKLA (63 aa)) enclose the TRAM domain.

It belongs to the methylthiotransferase family. MiaB subfamily. As to quaternary structure, monomer. Requires [4Fe-4S] cluster as cofactor.

Its subcellular location is the cytoplasm. The catalysed reaction is N(6)-dimethylallyladenosine(37) in tRNA + (sulfur carrier)-SH + AH2 + 2 S-adenosyl-L-methionine = 2-methylsulfanyl-N(6)-dimethylallyladenosine(37) in tRNA + (sulfur carrier)-H + 5'-deoxyadenosine + L-methionine + A + S-adenosyl-L-homocysteine + 2 H(+). Its function is as follows. Catalyzes the methylthiolation of N6-(dimethylallyl)adenosine (i(6)A), leading to the formation of 2-methylthio-N6-(dimethylallyl)adenosine (ms(2)i(6)A) at position 37 in tRNAs that read codons beginning with uridine. In Brucella anthropi (strain ATCC 49188 / DSM 6882 / CCUG 24695 / JCM 21032 / LMG 3331 / NBRC 15819 / NCTC 12168 / Alc 37) (Ochrobactrum anthropi), this protein is tRNA-2-methylthio-N(6)-dimethylallyladenosine synthase.